Reading from the N-terminus, the 297-residue chain is Formamidopyrimidine-DNA glycosylase (297 aa).

P2 serves as the catalytic Schiff-base intermediate with DNA. E3 acts as the Proton donor in catalysis. K58 serves as the catalytic Proton donor; for beta-elimination activity. The DNA site is built by H104, R127, and K170. Residues 261 to 297 (NVYDREGEACRTPGCTGTVERMTQAGRSTFHCPQCQR) form an FPG-type zinc finger. R287 functions as the Proton donor; for delta-elimination activity in the catalytic mechanism.

Belongs to the FPG family. Monomer. It depends on Zn(2+) as a cofactor.

It carries out the reaction Hydrolysis of DNA containing ring-opened 7-methylguanine residues, releasing 2,6-diamino-4-hydroxy-5-(N-methyl)formamidopyrimidine.. The enzyme catalyses 2'-deoxyribonucleotide-(2'-deoxyribose 5'-phosphate)-2'-deoxyribonucleotide-DNA = a 3'-end 2'-deoxyribonucleotide-(2,3-dehydro-2,3-deoxyribose 5'-phosphate)-DNA + a 5'-end 5'-phospho-2'-deoxyribonucleoside-DNA + H(+). Functionally, involved in base excision repair of DNA damaged by oxidation or by mutagenic agents. Acts as a DNA glycosylase that recognizes and removes damaged bases. Has a preference for oxidized purines, such as 7,8-dihydro-8-oxoguanine (8-oxoG). Has AP (apurinic/apyrimidinic) lyase activity and introduces nicks in the DNA strand. Cleaves the DNA backbone by beta-delta elimination to generate a single-strand break at the site of the removed base with both 3'- and 5'-phosphates. The sequence is that of Formamidopyrimidine-DNA glycosylase from Allorhizobium ampelinum (strain ATCC BAA-846 / DSM 112012 / S4) (Agrobacterium vitis (strain S4)).